A 178-amino-acid chain; its full sequence is uncharacterized protein (178 aa).

This sequence belongs to the IIV-6 136R family.

This is an uncharacterized protein from Invertebrate iridescent virus 6 (IIV-6).